Consider the following 30-residue polypeptide: Cyclotide hyen-L (30 aa).

A cross-link (cyclopeptide (Gly-Asn)) is located at residues 1–30 (GIPCAESCVYIPCTVTALLGCSCSDKVCYN). 3 disulfides stabilise this stretch: C4-C21, C8-C23, and C13-C28.

This is a cyclic peptide. As to expression, detected in stems (at protein level).

Functionally, probably participates in a plant defense mechanism. Has cytotoxic activity against HUVEC cells (LC(50)= 2.26 uM) and various cancer cells including HeLa (LC(50)= 3.48 uM), MCF-7 and K562. Displays very weak hemolytic activity. Binds to and induces leakage in phospholipd membranes, particularly ones containing 1-palmitoyl-2-oleophosphatidylethanolamine (POPE). In Pigea enneasperma (Spade flower), this protein is Cyclotide hyen-L.